The following is a 235-amino-acid chain: Voltage-gated hydrogen channel 1 (235 aa).

Topologically, residues 1 to 62 (MSRYLKHFTV…VMKKLFSSRR (62 aa)) are cytoplasmic. Residues 63 to 83 (FQIVIVFLVIVDALLVLGELL) traverse the membrane as a helical segment. Topologically, residues 84–100 (MDLKIIHPDKYHIAPKV) are extracellular. Residues 101 to 123 (FHYLSLSILTIFLVEVGFKIFVY) form a helical membrane-spanning segment. The Cytoplasmic segment spans residues 124–131 (GREFFHHK). A helical transmembrane segment spans residues 132 to 152 (FEVLDSIVVVVSFILDLVLLF). The Extracellular portion of the chain corresponds to 153–159 (REHEFEA). Residues 160 to 180 (VGLLILLRLWRVARIINGIIL) traverse the membrane as a helical segment. Over 181 to 235 (SVKTRSEQQVSKLKQVNLKLATKVEQLQHSCVEKEQEIERLTRMLKQHGLLSEQT) the chain is Cytoplasmic. A coiled-coil region spans residues 187–228 (EQQVSKLKQVNLKLATKVEQLQHSCVEKEQEIERLTRMLKQH).

This sequence belongs to the hydrogen channel family. In terms of assembly, homodimer.

The protein resides in the membrane. It localises to the cell membrane. In terms of biological role, mediates the voltage-dependent proton permeability of excitable membranes. Forms a proton-selective channel through which protons may pass in accordance with their electrochemical gradient. The polypeptide is Voltage-gated hydrogen channel 1 (HVCN1) (Gallus gallus (Chicken)).